The sequence spans 690 residues: Glycine--tRNA ligase beta subunit (690 aa).

It belongs to the class-II aminoacyl-tRNA synthetase family. Tetramer of two alpha and two beta subunits.

The protein localises to the cytoplasm. It carries out the reaction tRNA(Gly) + glycine + ATP = glycyl-tRNA(Gly) + AMP + diphosphate. In Desulfatibacillum aliphaticivorans, this protein is Glycine--tRNA ligase beta subunit.